The chain runs to 119 residues: MARVKRAKNSRKNHKKVLKLAKGYYGGKSKLYKTANESVIRALRNSYVGRKNKKRDYRSLWIARINAATRINNLSYSKFMNGIKLAGIDINRKMLSEIAINDPKAFTELVEVAKKQLNA.

Belongs to the bacterial ribosomal protein bL20 family.

Binds directly to 23S ribosomal RNA and is necessary for the in vitro assembly process of the 50S ribosomal subunit. It is not involved in the protein synthesizing functions of that subunit. The protein is Large ribosomal subunit protein bL20 of Clostridium beijerinckii (strain ATCC 51743 / NCIMB 8052) (Clostridium acetobutylicum).